We begin with the raw amino-acid sequence, 353 residues long: Phosphate acyltransferase (353 aa).

It belongs to the PlsX family. As to quaternary structure, homodimer. Probably interacts with PlsY.

It localises to the cytoplasm. It catalyses the reaction a fatty acyl-[ACP] + phosphate = an acyl phosphate + holo-[ACP]. The protein operates within lipid metabolism; phospholipid metabolism. Its function is as follows. Catalyzes the reversible formation of acyl-phosphate (acyl-PO(4)) from acyl-[acyl-carrier-protein] (acyl-ACP). This enzyme utilizes acyl-ACP as fatty acyl donor, but not acyl-CoA. This chain is Phosphate acyltransferase, found in Myxococcus xanthus (strain DK1622).